The primary structure comprises 243 residues: Exosome complex component Rrp41 (243 aa).

Belongs to the RNase PH family. Rrp41 subfamily. Component of the archaeal exosome complex. Forms a hexameric ring-like arrangement composed of 3 Rrp41-Rrp42 heterodimers. The hexameric ring associates with a trimer of Rrp4 and/or Csl4 subunits.

The protein localises to the cytoplasm. Catalytic component of the exosome, which is a complex involved in RNA degradation. Has 3'-&gt;5' exoribonuclease activity. Can also synthesize heteromeric RNA-tails. This chain is Exosome complex component Rrp41, found in Sulfolobus acidocaldarius (strain ATCC 33909 / DSM 639 / JCM 8929 / NBRC 15157 / NCIMB 11770).